The following is an 838-amino-acid chain: MAALLYFPKISSQMTSSHFISFSPMDLRRLSRASYLFTRRLKFIAKSRKCFHTSRYLQQCVHRPDKSEETSSDRHLHERLSSVLSKRSLDYEQCKQLITVLSPLEFDRLFPEFRSKVNPKTALDFFRLASDSFSFSFSLRSYCLLIGLLLDANLLSAARVVLIRLINGNVPVLPCGLRDSRVAIADAMASLSLCFDEEIRRKMSDLLIEVYCTQFKRDGCYLALDVFPVLANKGMFPSKTTCNILLTSLVRANEFQKCCEAFDVVCKGVSPDVYLFTTAINAFCKGGKVEEAVKLFSKMEEAGVAPNVVTFNTVIDGLGMCGRYDEAFMFKEKMVERGMEPTLITYSILVKGLTRAKRIGDAYFVLKEMTKKGFPPNVIVYNNLIDSFIEAGSLNKAIEIKDLMVSKGLSLTSSTYNTLIKGYCKNGQADNAERLLKEMLSIGFNVNQGSFTSVICLLCSHLMFDSALRFVGEMLLRNMSPGGGLLTTLISGLCKHGKHSKALELWFQFLNKGFVVDTRTSNALLHGLCEAGKLDEAFRIQKEILGRGCVMDRVSYNTLISGCCGKKKLDEAFMFLDEMVKRGLKPDNYTYSILICGLFNMNKVEEAIQFWDDCKRNGMLPDVYTYSVMIDGCCKAERTEEGQEFFDEMMSKNVQPNTVVYNHLIRAYCRSGRLSMALELREDMKHKGISPNSATYTSLIKGMSIISRVEEAKLLFEEMRMEGLEPNVFHYTALIDGYGKLGQMVKVECLLREMHSKNVHPNKITYTVMIGGYARDGNVTEASRLLNEMREKGIVPDSITYKEFIYGYLKQGGVLEAFKGSDEENYAAIIEGWNKLIQ.

A chloroplast-targeting transit peptide spans 1–32 (MAALLYFPKISSQMTSSHFISFSPMDLRRLSR). PPR repeat units follow at residues 238–268 (SKTTCNILLTSLVRANEFQKCCEAFDVVCKG), 272–306 (DVYLFTTAINAFCKGGKVEEAVKLFSKMEEAGVAP), 307–341 (NVVTFNTVIDGLGMCGRYDEAFMFKEKMVERGMEP), 342–376 (TLITYSILVKGLTRAKRIGDAYFVLKEMTKKGFPP), 377–411 (NVIVYNNLIDSFIEAGSLNKAIEIKDLMVSKGLSL), 412–446 (TSSTYNTLIKGYCKNGQADNAERLLKEMLSIGFNV), 447–481 (NQGSFTSVICLLCSHLMFDSALRFVGEMLLRNMSP), 482–516 (GGGLLTTLISGLCKHGKHSKALELWFQFLNKGFVV), 517–551 (DTRTSNALLHGLCEAGKLDEAFRIQKEILGRGCVM), 552–586 (DRVSYNTLISGCCGKKKLDEAFMFLDEMVKRGLKP), 587–621 (DNYTYSILICGLFNMNKVEEAIQFWDDCKRNGMLP), 622–656 (DVYTYSVMIDGCCKAERTEEGQEFFDEMMSKNVQP), 657–691 (NTVVYNHLIRAYCRSGRLSMALELREDMKHKGISP), 692–726 (NSATYTSLIKGMSIISRVEEAKLLFEEMRMEGLEP), 727–761 (NVFHYTALIDGYGKLGQMVKVECLLREMHSKNVHP), and 762–796 (NKITYTVMIGGYARDGNVTEASRLLNEMREKGIVP).

This sequence belongs to the PPR family. P subfamily.

It is found in the plastid. It localises to the chloroplast. The polypeptide is Pentatricopeptide repeat-containing protein At4g19440, chloroplastic (Arabidopsis thaliana (Mouse-ear cress)).